The primary structure comprises 690 residues: Eukaryotic translation initiation factor 3 subunit B (690 aa).

Positions 1–11 (MAKKKSEEHSS) are enriched in basic and acidic residues. The interval 1–33 (MAKKKSEEHSSADANDSDYQEEPNFDDPPNFVD) is disordered. The segment covering 15–25 (NDSDYQEEPNF) has biased composition (acidic residues). Residues 57–141 (SVVVVDNIPK…HTFAVNLFTD (85 aa)) form the RRM domain. 5 WD repeats span residues 207–246 (TRER…KIQK), 293–331 (DGMS…LLDL), 334–369 (IKIP…TLME), 442–484 (EIRE…KPSL), and 530–575 (PDHF…IKRT). The stretch at 614 to 645 (QKDRLRLTRASKELLEKRSQLRETFMEYRNKR) forms a coiled coil.

The protein belongs to the eIF-3 subunit B family. Component of the eukaryotic translation initiation factor 3 (eIF-3) complex. The eIF-3 complex interacts with pix. Interacts with mxt.

It is found in the cytoplasm. In terms of biological role, RNA-binding component of the eukaryotic translation initiation factor 3 (eIF-3) complex, which is involved in protein synthesis of a specialized repertoire of mRNAs and, together with other initiation factors, stimulates binding of mRNA and methionyl-tRNAi to the 40S ribosome. The eIF-3 complex specifically targets and initiates translation of a subset of mRNAs involved in cell proliferation. This chain is Eukaryotic translation initiation factor 3 subunit B, found in Drosophila willistoni (Fruit fly).